We begin with the raw amino-acid sequence, 114 residues long: uncharacterized protein (114 aa).

This is an uncharacterized protein from Escherichia coli O157:H7.